The sequence spans 319 residues: Probable arabinan endo-1,5-alpha-L-arabinosidase A (319 aa).

Residues 1-19 form the signal peptide; that stretch reads MYLQSSLALVLLRAAVVHG. The active-site Proton acceptor is D34. N53 carries an N-linked (GlcNAc...) asparagine glycan. Residue E198 is the Proton donor of the active site.

This sequence belongs to the glycosyl hydrolase 43 family.

The protein localises to the secreted. It catalyses the reaction Endohydrolysis of (1-&gt;5)-alpha-arabinofuranosidic linkages in (1-&gt;5)-arabinans.. It functions in the pathway glycan metabolism; L-arabinan degradation. In terms of biological role, endo-1,5-alpha-L-arabinanase involved in degradation of pectin. Its preferred substrate is linear 1,5-alpha-L-arabinan. This chain is Probable arabinan endo-1,5-alpha-L-arabinosidase A (abnA), found in Aspergillus flavus (strain ATCC 200026 / FGSC A1120 / IAM 13836 / NRRL 3357 / JCM 12722 / SRRC 167).